The sequence spans 382 residues: F-box/kelch-repeat protein At3g16580 (382 aa).

The F-box domain maps to 9–55; sequence WEFSLSLPWELIEEILSRVPPESLLRFKTVSKQWNALFRDKTFINNH. Kelch repeat units follow at residues 150-196 and 334-381; these read KIFA…NIYT and WIYV…AELQ.

The sequence is that of F-box/kelch-repeat protein At3g16580 from Arabidopsis thaliana (Mouse-ear cress).